The primary structure comprises 476 residues: ATP sulfurylase 2 (476 aa).

The N-terminal 56 residues, 1–56 (MSLMIRSSYVSHITLFQPRNSKPSSFTNQISFLSSSNNNPFLNLVYKRNLTMQSVS), are a transit peptide targeting the chloroplast.

Belongs to the sulfate adenylyltransferase family. As to quaternary structure, homotetramer. Mostly expressed in leaves or cotyledons.

The protein localises to the plastid. It localises to the chloroplast. It is found in the cytoplasm. The catalysed reaction is sulfate + ATP + H(+) = adenosine 5'-phosphosulfate + diphosphate. It functions in the pathway sulfur metabolism; hydrogen sulfide biosynthesis; sulfite from sulfate: step 1/3. This chain is ATP sulfurylase 2 (APS2), found in Arabidopsis thaliana (Mouse-ear cress).